Here is a 76-residue protein sequence, read N- to C-terminus: Conotoxin Cal5a L3 (76 aa).

Positions 1–22 (MRFYIGLMAALMLTSVLRTDSA) are cleaved as a signal peptide. Residues 23 to 42 (SVGQTGTKSELAVIERVIRQ) constitute a propeptide that is removed on maturation. Pro50 is subject to 4-hydroxyproline. 3 positions are modified to 4-hydroxyproline; partial: Pro58, Pro62, and Pro64.

This sequence belongs to the conotoxin T superfamily. Post-translationally, contains 2 disulfide bonds that can be either 'C1-C3, C2-C4' or 'C1-C4, C2-C3', since these disulfide connectivities have been observed for conotoxins with cysteine framework V (for examples, see AC P0DQQ7 and AC P81755). As to expression, expressed by the venom duct.

The protein localises to the secreted. Probable neurotoxin with unknown target. Possibly targets ion channels. This Californiconus californicus (California cone) protein is Conotoxin Cal5a L3.